We begin with the raw amino-acid sequence, 438 residues long: GTPase Obg (438 aa).

One can recognise an Obg domain in the interval 2–160 (NMFVDQIKIE…HYLELELKML (159 aa)). Residues 161–337 (ADVGLIGFPS…LMQLTADLLD (177 aa)) enclose the OBG-type G domain. GTP is bound by residues 167–174 (GFPSVGKS), 192–196 (FTTLT), 214–217 (DMPG), 284–287 (TKMD), and 318–320 (SAV). Positions 174 and 194 each coordinate Mg(2+). The region spanning 360 to 438 (PDKKDEADFT…IEKFVFEFIQ (79 aa)) is the OCT domain.

This sequence belongs to the TRAFAC class OBG-HflX-like GTPase superfamily. OBG GTPase family. As to quaternary structure, monomer. Mg(2+) is required as a cofactor.

The protein localises to the cytoplasm. An essential GTPase which binds GTP, GDP and possibly (p)ppGpp with moderate affinity, with high nucleotide exchange rates and a fairly low GTP hydrolysis rate. Plays a role in control of the cell cycle, stress response, ribosome biogenesis and in those bacteria that undergo differentiation, in morphogenesis control. This Limosilactobacillus reuteri (strain DSM 20016) (Lactobacillus reuteri) protein is GTPase Obg.